Consider the following 194-residue polypeptide: uncharacterized protein (194 aa).

Belongs to the mimivirus R457/R459 family.

Its subcellular location is the virion. This is an uncharacterized protein from Acanthamoeba polyphaga mimivirus (APMV).